Consider the following 543-residue polypeptide: Protein DETOXIFICATION 47, chloroplastic (543 aa).

The transit peptide at 1-30 (MLIKSQRLTLFSPLLSKTRRIPVNSHQTLV) directs the protein to the chloroplast. A coiled-coil region spans residues 55-94 (VIRRRIKLERVTRNCVRIDREIDEEEEEEEKERGDLVKQS). 12 helical membrane-spanning segments follow: residues 107-127 (GPAM…TVVI), 135-155 (LAAL…FMFL), 181-201 (VLLF…RLFG), 228-248 (GLAW…LGMK), 256-276 (ALAA…LFLG), 278-298 (GIAG…YMMM), 319-339 (LWKI…KIAF), 342-362 (FIIY…QVMA), 406-426 (IIGA…PGLF), 443-463 (LLIP…LEGT), 472-492 (FVSS…MFVT), and 497-517 (GLLG…GLYL).

This sequence belongs to the multi antimicrobial extrusion (MATE) (TC 2.A.66.1) family. In terms of tissue distribution, preferentially expressed in the epidermal cells.

The protein resides in the plastid. It is found in the chloroplast membrane. In terms of biological role, functions as a multidrug and toxin extrusion transporter in the export of salicylic acid (SA) from the chloroplast to the cytoplasm. Plays an essential function in plant defense via the pathogen-induced salicylic acid (SA) accumulation. Also acts as a key component of the Age-related resistance (ARR) pathway. This Arabidopsis thaliana (Mouse-ear cress) protein is Protein DETOXIFICATION 47, chloroplastic.